A 696-amino-acid chain; its full sequence is PWWP domain-containing DNA repair factor 3B (696 aa).

Polar residues-rich tracts occupy residues glutamine 119 to serine 128 and cysteine 290 to methionine 300. Disordered stretches follow at residues glutamine 119–glycine 143 and asparagine 278–glutamate 303. Serine 128 bears the Phosphoserine mark. Residues threonine 392–methionine 453 form the PWWP domain.

This sequence belongs to the PWWP3A family.

The protein is PWWP domain-containing DNA repair factor 3B of Homo sapiens (Human).